A 127-amino-acid chain; its full sequence is Sulfiredoxin (127 aa).

Belongs to the sulfiredoxin family. Requires Mg(2+) as cofactor. In terms of processing, forms a transient disulfide bond with TSA1 during the reduction of cysteine sulfinic acid (-SO2H).

The protein resides in the cytoplasm. Its subcellular location is the nucleus. It carries out the reaction S-hydroxy-S-oxy-L-cysteinyl-[peroxiredoxin] + [protein]-dithiol + ATP = S-hydroxy-L-cysteinyl-[peroxiredoxin] + [protein]-disulfide + ADP + phosphate. Its function is as follows. Contributes to oxidative stress resistance by reducing cysteine-sulfinic acid formed under exposure to oxidants in the peroxiredoxin TSA1. May catalyze the reduction in a multi-step process by acting both as a specific phosphotransferase and as thioltransferase. This is Sulfiredoxin from Saccharomyces cerevisiae (strain ATCC 204508 / S288c) (Baker's yeast).